Here is a 734-residue protein sequence, read N- to C-terminus: ABC transporter D family member 1 (734 aa).

Helical transmembrane passes span 52-72, 112-132, 177-197, and 204-224; these read IIKILYAKPVIPLTLFLILFG, FAIGGSALLAAIINFIVSIMA, FTTLLASIVSQCITGPMVVVY, and TTIDWYAPLIVYGFFFLGYLI. Residues 63–351 enclose the ABC transmembrane type-1 domain; that stretch reads PLTLFLILFG…VEEEQAKIQF (289 aa). The span at 271-286 shows a compositional bias: basic and acidic residues; sequence HPEKRFDNNDYDHGYE. The interval 271–296 is disordered; that stretch reads HPEKRFDNNDYDHGYESDDSDQSCDE. Residues 332–359 adopt a coiled-coil conformation; sequence DSNDQKEELLVEEEQAKIQFEALLKNKK. The chain crosses the membrane as a helical span at residues 374-394; it reads LFTYLSPIANYFIIAIPVFFL. An ABC transporter domain is found at 492 to 729; the sequence is ITLDDVTYFT…NNNNTNKIAE (238 aa). 525–532 serves as a coordination point for ATP; sequence GPSGSGKS. Residues 712–725 show a composition bias toward low complexity; the sequence is QSNNINNNNNNNTN. A disordered region spans residues 712-734; the sequence is QSNNINNNNNNNTNKIAEDSVFD.

It belongs to the ABC transporter superfamily. ABCD family. Peroxisomal fatty acyl CoA transporter (TC 3.A.1.203) subfamily.

The protein localises to the membrane. The enzyme catalyses (9Z)-octadecenoyl-CoA(in) = (9Z)-octadecenoyl-CoA(out). This Dictyostelium discoideum (Social amoeba) protein is ABC transporter D family member 1 (abcD1).